The following is an 808-amino-acid chain: MAPPSVGRKSKNISKGKVDARTLKRKRVEEDLEKLQKSVDELDAKAEIKNFSELPLSGPTSSGLEASHFKTLTDVQSKAVPLALKGKDILGAAKTGSGKTLAFLVPVLENLYRQKWTELDGLGALIISPTRELAIQIFEVLRKIGRYHTFSAGLIIGGRSLQEERERLGRMNILVCTPGRMLQHMDQTAAFDVDNLQMLVLDEADRIMDMGFQTSVDAILEHLPKQRQTMLFSATQTKKVSDLARLSLKEPEYVAVHEAASSATPTTLQQHYCVVPLPEKLNTLFGFIRANLKAKIIVFMSSGKQVRFVYESLRHLQPGIPLLHLHGRQKQTARLDITSKFSSSKNSCIFATDVVARGLDFPAVDWVIQLDCPEDADTYIHRVGRTARYGKVGRAVLFLDPSEEEGMLKRLEHKKVPIQKINIRPNKTQDIKNQLQNMCFQDPELKYLGQKAFVSYAKSVFLQKDKEIFNINDIDLEGYASSIGLPGAPKIKFQKGNDAKNVKNAPRAAIESSDEDSETEKKPKKKDEVRTKYDRMFERRNQDVLSGHYSKMIADDTPMKDVDGTADADEDNDFLSVKRVLPVDNDDTSDDEDDDDDDDDDDDDVAATGPLGKVIEGISKDPIVIDSKRKEKLLKSKKKLLKLKDRGTKLVFDEEGNPHQVYELQDEEDFRAKGTAEEQRAKFLEEEAERVREADLLDKQTAKDKKREKREKRKAREAALDDDDEEALELVDAGDDEDPMALLKSLPLPEDEEDEDSTARPAKRPKKWFEDDSDDERKVAKRKGRVIEAADEPETLEDLEALAAGLLN.

The segment at 1–20 is disordered; it reads MAPPSVGRKSKNISKGKVDA. Positions 49-77 match the Q motif motif; that stretch reads KNFSELPLSGPTSSGLEASHFKTLTDVQS. Residues 80-254 form the Helicase ATP-binding domain; it reads VPLALKGKDI…RLSLKEPEYV (175 aa). 93-100 contacts ATP; that stretch reads AKTGSGKT. A DEAD box motif is present at residues 202–205; it reads DEAD. One can recognise a Helicase C-terminal domain in the interval 280–439; sequence KLNTLFGFIR…DIKNQLQNMC (160 aa). Disordered stretches follow at residues 491–535, 555–620, and 654–795; these read IKFQ…KYDR, DDTP…GISK, and EEGN…EPET. Positions 519–535 are enriched in basic and acidic residues; the sequence is TEKKPKKKDEVRTKYDR. Composition is skewed to acidic residues over residues 564–573 and 584–605; these read GTADADEDND and DNDD…DDDV. A compositionally biased stretch (basic and acidic residues) spans 670 to 705; the sequence is FRAKGTAEEQRAKFLEEEAERVREADLLDKQTAKDK. Positions 720–739 are enriched in acidic residues; sequence LDDDDEEALELVDAGDDEDP. Residues 767-778 are compositionally biased toward basic and acidic residues; it reads KWFEDDSDDERK.

The protein belongs to the DEAD box helicase family. DDX10/DBP4 subfamily. Interacts with the U3 and U14 snoRNAs. Associates with pre-ribosomal complexes.

It localises to the nucleus. The protein resides in the nucleolus. It carries out the reaction ATP + H2O = ADP + phosphate + H(+). Its function is as follows. ATP-dependent RNA helicase required for ribosome biogenesis. Involved in the release of U14 snoRNA in pre-ribosomal complexes. Required for pre-rRNA cleavage at site A2. The chain is ATP-dependent RNA helicase dbp4 (dbp4) from Sclerotinia sclerotiorum (strain ATCC 18683 / 1980 / Ss-1) (White mold).